The sequence spans 1064 residues: Isoleucine--tRNA ligase, cytoplasmic (1064 aa).

Positions 42–52 match the 'HIGH' region motif; it reads PFATGRPHHGH. The 'KMSKS' region signature appears at 597–601; sequence KMSKR. Residue Lys600 coordinates ATP.

The protein belongs to the class-I aminoacyl-tRNA synthetase family.

It is found in the cytoplasm. The catalysed reaction is tRNA(Ile) + L-isoleucine + ATP = L-isoleucyl-tRNA(Ile) + AMP + diphosphate. The sequence is that of Isoleucine--tRNA ligase, cytoplasmic (irs1) from Schizosaccharomyces pombe (strain 972 / ATCC 24843) (Fission yeast).